A 292-amino-acid chain; its full sequence is Probable ABC transporter phosphonate/phosphite binding protein PhnD2 (292 aa).

Positions 1-20 (MKLKSLLSVFTISIVALTSA) are cleaved as a signal peptide. The N-palmitoyl cysteine moiety is linked to residue cysteine 21. Residue cysteine 21 is the site of S-diacylglycerol cysteine attachment.

This sequence belongs to the phosphate/phosphite/phosphonate binding protein family. In terms of assembly, the complex may be composed of two ATP-binding proteins (PhnC2), two transmembrane proteins (PhnE2) and a solute-binding protein (PhnD2).

The protein localises to the cell membrane. Functionally, probably part of the ABC transporter complex PhnC2D2E2. Binds strongly to methylphosphonate (MPn), ethylphosphonate (EPn) and inorganic phosphite. This Prochlorococcus marinus (strain MIT 9301) protein is Probable ABC transporter phosphonate/phosphite binding protein PhnD2.